A 444-amino-acid chain; its full sequence is Na(+)-translocating NADH-quinone reductase subunit A (444 aa).

The protein belongs to the NqrA family. Composed of six subunits; NqrA, NqrB, NqrC, NqrD, NqrE and NqrF.

The enzyme catalyses a ubiquinone + n Na(+)(in) + NADH + H(+) = a ubiquinol + n Na(+)(out) + NAD(+). In terms of biological role, NQR complex catalyzes the reduction of ubiquinone-1 to ubiquinol by two successive reactions, coupled with the transport of Na(+) ions from the cytoplasm to the periplasm. NqrA to NqrE are probably involved in the second step, the conversion of ubisemiquinone to ubiquinol. This Shewanella amazonensis (strain ATCC BAA-1098 / SB2B) protein is Na(+)-translocating NADH-quinone reductase subunit A.